The chain runs to 525 residues: Vesicular inhibitory amino acid transporter (525 aa).

At 1 to 132 the chain is on the cytoplasmic side; the sequence is MATLLRSKLS…WNVTNAIQGM (132 aa). Residues 83–107 are disordered; that stretch reads IHYQRGSGAPLPPSGSKDQVGGGGE. A helical membrane pass occupies residues 133–153; it reads FVLGLPYAILHGGYLGLFLII. Topologically, residues 154-204 are lumenal, vesicle; sequence FAAVVCCYTGKILIACLYEENEDGEVVRVRDSYVAIANACCAPRFPTLGGR. Tyr186 carries the post-translational modification 3'-nitrotyrosine. Residues 205-225 form a helical membrane-spanning segment; it reads VVNVAQIIELVMTCILYVVVS. The Cytoplasmic segment spans residues 226–265; that stretch reads GNLMYNSFPGLPVSQKSWSIIATAVLLPCAFLKNLKAVSK. The chain crosses the membrane as a helical span at residues 266-286; that stretch reads FSLLCTLAHFVINILVIAYCL. Topologically, residues 287-305 are lumenal, vesicle; that stretch reads SRARDWAWEKVKFYIDVKK. A helical membrane pass occupies residues 306–326; that stretch reads FPISIGIIVFSYTSQIFLPSL. Over 327–341 the chain is Cytoplasmic; it reads EGNMQQPSEFHCMMN. Residues 342-362 traverse the membrane as a helical segment; it reads WTHIAACVLKGLFALVAYLTW. Topologically, residues 363-383 are lumenal, vesicle; that stretch reads ADETKEVITDNLPGSIRAVVN. The chain crosses the membrane as a helical span at residues 384-404; sequence IFLVAKALLSYPLPFFAAVEV. At 405–438 the chain is on the cytoplasmic side; that stretch reads LEKSLFQEGSRAFFPACYSGDGRLKSWGLTLRCA. The chain crosses the membrane as a helical span at residues 439–459; that stretch reads LVVFTLLMAIYVPHFALLMGL. Residues 460–461 are Lumenal, vesicle-facing; the sequence is TG. Residues 462-482 traverse the membrane as a helical segment; sequence SLTGAGLCFLLPSLFHLRLLW. Residues 483–489 lie on the Cytoplasmic side of the membrane; the sequence is RKLLWHQ. A helical membrane pass occupies residues 490-510; the sequence is VFFDVAIFVIGGICSVSGFVH. The Lumenal, vesicle portion of the chain corresponds to 511–525; it reads SLEGLIEAYRTNAED.

It belongs to the amino acid/polyamine transporter 2 family. As to expression, retina. Expressed throughout the horizontal cells or more specifically at the terminals.

It is found in the cytoplasmic vesicle membrane. It localises to the presynapse. It carries out the reaction 4-aminobutanoate(out) + n H(+)(in) = 4-aminobutanoate(in) + n H(+)(out). The catalysed reaction is glycine(out) + n H(+)(in) = glycine(in) + n H(+)(out). It catalyses the reaction beta-alanine(out) + n H(+)(in) = beta-alanine(in) + n H(+)(out). Its function is as follows. Antiporter that exchanges vesicular protons for cytosolic 4-aminobutanoate or to a lesser extend glycine, thus allowing their secretion from nerve terminals. The transport is equally dependent on the chemical and electrical components of the proton gradient. May also transport beta-alanine. Acidification of GABAergic synaptic vesicles is a prerequisite for 4-aminobutanoate uptake. The chain is Vesicular inhibitory amino acid transporter from Homo sapiens (Human).